Consider the following 417-residue polypeptide: Serine--tRNA ligase (417 aa).

226–228 is an L-serine binding site; the sequence is TSE. Residues 257 to 259 and valine 273 contribute to the ATP site; that span reads RRE. L-serine is bound at residue glutamate 280. 344–347 is an ATP binding site; that stretch reads ELTS. L-serine is bound at residue threonine 379.

Belongs to the class-II aminoacyl-tRNA synthetase family. Type-1 seryl-tRNA synthetase subfamily. In terms of assembly, homodimer. The tRNA molecule binds across the dimer.

The protein localises to the cytoplasm. It catalyses the reaction tRNA(Ser) + L-serine + ATP = L-seryl-tRNA(Ser) + AMP + diphosphate + H(+). The enzyme catalyses tRNA(Sec) + L-serine + ATP = L-seryl-tRNA(Sec) + AMP + diphosphate + H(+). The protein operates within aminoacyl-tRNA biosynthesis; selenocysteinyl-tRNA(Sec) biosynthesis; L-seryl-tRNA(Sec) from L-serine and tRNA(Sec): step 1/1. Functionally, catalyzes the attachment of serine to tRNA(Ser). Is also able to aminoacylate tRNA(Sec) with serine, to form the misacylated tRNA L-seryl-tRNA(Sec), which will be further converted into selenocysteinyl-tRNA(Sec). The sequence is that of Serine--tRNA ligase from Mycolicibacterium smegmatis (strain ATCC 700084 / mc(2)155) (Mycobacterium smegmatis).